The primary structure comprises 362 residues: GDSL esterase/lipase At5g22810 (362 aa).

The signal sequence occupies residues 1–28 (MGFSGIWLNLYVVFGSLMVFERMVVMVV). The Nucleophile role is filled by serine 44. Asparagine 159, asparagine 162, asparagine 264, and asparagine 329 each carry an N-linked (GlcNAc...) asparagine glycan. Catalysis depends on residues aspartate 337 and histidine 340.

The protein belongs to the 'GDSL' lipolytic enzyme family.

The protein localises to the secreted. The sequence is that of GDSL esterase/lipase At5g22810 from Arabidopsis thaliana (Mouse-ear cress).